The chain runs to 498 residues: Sulfate adenylyltransferase subunit 1 (498 aa).

The tr-type G domain occupies 30–246 (TRPLRLITCG…LELATTRSAQ (217 aa)). The tract at residues 39-46 (GSVDDGKS) is G1. A GTP-binding site is contributed by 39–46 (GSVDDGKS). Residues 97-101 (GITID) form a G2 region. The interval 118–121 (DTPG) is G3. GTP contacts are provided by residues 118–122 (DTPGH) and 173–176 (NKID). The segment at 173-176 (NKID) is G4. Residues 210-212 (SAL) form a G5 region.

It belongs to the TRAFAC class translation factor GTPase superfamily. Classic translation factor GTPase family. CysN/NodQ subfamily. In terms of assembly, heterodimer composed of CysD, the smaller subunit, and CysN.

It carries out the reaction sulfate + ATP + H(+) = adenosine 5'-phosphosulfate + diphosphate. It functions in the pathway sulfur metabolism; hydrogen sulfide biosynthesis; sulfite from sulfate: step 1/3. Its function is as follows. With CysD forms the ATP sulfurylase (ATPS) that catalyzes the adenylation of sulfate producing adenosine 5'-phosphosulfate (APS) and diphosphate, the first enzymatic step in sulfur assimilation pathway. APS synthesis involves the formation of a high-energy phosphoric-sulfuric acid anhydride bond driven by GTP hydrolysis by CysN coupled to ATP hydrolysis by CysD. The chain is Sulfate adenylyltransferase subunit 1 from Rhizobium meliloti (strain 1021) (Ensifer meliloti).